We begin with the raw amino-acid sequence, 339 residues long: 2,3,4,5-tetrahydropyridine-2,6-dicarboxylate N-succinyltransferase (339 aa).

Asp-180 provides a ligand contact to Mg(2+). Glu-213 acts as the Acyl-anhydride intermediate in catalysis. Succinyl-CoA contacts are provided by residues Arg-215, Gly-230, Ser-233, Ala-256, 271-272 (EA), Gly-279, and Lys-300.

Belongs to the type 2 tetrahydrodipicolinate N-succinyltransferase family. In terms of assembly, homotrimer.

The protein localises to the cytoplasm. The enzyme catalyses (S)-2,3,4,5-tetrahydrodipicolinate + succinyl-CoA + H2O = (S)-2-succinylamino-6-oxoheptanedioate + CoA. The protein operates within amino-acid biosynthesis; L-lysine biosynthesis via DAP pathway; LL-2,6-diaminopimelate from (S)-tetrahydrodipicolinate (succinylase route): step 1/3. Functionally, catalyzes the conversion of the cyclic tetrahydrodipicolinate (THDP) into the acyclic N-succinyl-L-2-amino-6-oxopimelate using succinyl-CoA. The chain is 2,3,4,5-tetrahydropyridine-2,6-dicarboxylate N-succinyltransferase from Bifidobacterium longum (strain NCC 2705).